Reading from the N-terminus, the 154-residue chain is Ribonuclease H (154 aa).

The RNase H type-1 domain maps to 1–142 (MRKQVEIFTD…CDELARAAAG (142 aa)). Residues Asp10, Glu48, Asp70, and Asp134 each contribute to the Mg(2+) site.

The protein belongs to the RNase H family. Monomer. The cofactor is Mg(2+).

The protein resides in the cytoplasm. The catalysed reaction is Endonucleolytic cleavage to 5'-phosphomonoester.. Functionally, endonuclease that specifically degrades the RNA of RNA-DNA hybrids. This is Ribonuclease H from Pectobacterium carotovorum subsp. carotovorum (strain PC1).